Here is a 187-residue protein sequence, read N- to C-terminus: UPF0301 protein Sala_0165 (187 aa).

This sequence belongs to the UPF0301 (AlgH) family.

This Sphingopyxis alaskensis (strain DSM 13593 / LMG 18877 / RB2256) (Sphingomonas alaskensis) protein is UPF0301 protein Sala_0165.